Consider the following 280-residue polypeptide: Energy-coupling factor transporter ATP-binding protein EcfA1 (280 aa).

In terms of domain architecture, ABC transporter spans 6 to 241 (LRTENISFQY…SHMLQEIGLD (236 aa)). Residue 40–47 (GQNGSGKS) coordinates ATP.

It belongs to the ABC transporter superfamily. Energy-coupling factor EcfA family. As to quaternary structure, forms a stable energy-coupling factor (ECF) transporter complex composed of 2 membrane-embedded substrate-binding proteins (S component), 2 ATP-binding proteins (A component) and 2 transmembrane proteins (T component).

It localises to the cell membrane. In terms of biological role, ATP-binding (A) component of a common energy-coupling factor (ECF) ABC-transporter complex. Unlike classic ABC transporters this ECF transporter provides the energy necessary to transport a number of different substrates. The polypeptide is Energy-coupling factor transporter ATP-binding protein EcfA1 (Bacillus cereus (strain ATCC 10987 / NRS 248)).